The chain runs to 295 residues: Elongation factor Ts (295 aa).

The interval 80–83 (TDFV) is involved in Mg(2+) ion dislocation from EF-Tu.

Belongs to the EF-Ts family.

It localises to the cytoplasm. Its function is as follows. Associates with the EF-Tu.GDP complex and induces the exchange of GDP to GTP. It remains bound to the aminoacyl-tRNA.EF-Tu.GTP complex up to the GTP hydrolysis stage on the ribosome. This Lysinibacillus sphaericus (strain C3-41) protein is Elongation factor Ts.